The sequence spans 491 residues: MAFYSYNSVLAIARTRFPSHFVHPTCSSYSPSCAFLHLPDSHLNKTCMKNYESKKYSDPSQPGNTVLHPGTRLIQKLHTSTCWLQEVPGKPQLEQATKHPQVTSPQATKETGMEIKEGKQSYRQKIMDELKYYYNGFYLLWIDAKVAARMVWRLLHGQVLTRRERRRLLRTCVDFFRLVPFMVFLIVPFMEFLLPVFLKLFPEMLPSTFESESKKEEKQKKKMAVKLELAKFLQETMTEMARRNRAKMGDASTQLSSYVKQVQTGHKPSTKEIVRFSKLFEDQLALEHLDRPQLVALCKLLELQTFGTNNLLRFQLLMKLKSIKADDEIIAKEGVTALSVSELQAACRARGMRSLGLTEEQLRQQLTEWQDLHLKENVPPSLLLLSRTFYLIDVKPKPIEIPLSGEAPKTDILVELPTFTESKENMVDLAPQLKGTKDEDFIQPPPVTSSPITPSTPISLPKGPITSSEEPTLQAKSQMTAQNSKASSKGA.

The N-terminal 25 residues, 1 to 25, are a transit peptide targeting the mitochondrion; it reads MAFYSYNSVLAIARTRFPSHFVHPT. Over 26–177 the chain is Mitochondrial intermembrane; sequence CSSYSPSCAF…LLRTCVDFFR (152 aa). Polar residues predominate over residues 94–109; it reads EQATKHPQVTSPQATK. Residues 94–115 form a disordered region; the sequence is EQATKHPQVTSPQATKETGMEI. The chain crosses the membrane as a helical span at residues 178-198; sequence LVPFMVFLIVPFMEFLLPVFL. The Mitochondrial matrix segment spans residues 199–491; sequence KLFPEMLPST…QNSKASSKGA (293 aa). Residues 208 to 235 are a coiled coil; it reads TFESESKKEEKQKKKMAVKLELAKFLQE. A Letm1 RBD domain is found at 221–438; that stretch reads KKMAVKLELA…LAPQLKGTKD (218 aa). Residues 435–491 are disordered; that stretch reads GTKDEDFIQPPPVTSSPITPSTPISLPKGPITSSEEPTLQAKSQMTAQNSKASSKGA. Positions 449 to 461 are enriched in low complexity; that stretch reads SSPITPSTPISLP. The segment covering 465–491 has biased composition (polar residues); the sequence is ITSSEEPTLQAKSQMTAQNSKASSKGA.

It localises to the mitochondrion inner membrane. The polypeptide is LETM1 domain-containing protein LETM2, mitochondrial (LETM2) (Homo sapiens (Human)).